A 2290-amino-acid chain; its full sequence is Protein Ycf2 (2290 aa).

1644-1651 (GSIGTGRS) serves as a coordination point for ATP.

Belongs to the Ycf2 family.

It localises to the plastid. It is found in the chloroplast stroma. Probable ATPase of unknown function. Its presence in a non-photosynthetic plant (Epifagus virginiana) and experiments in tobacco indicate that it has an essential function which is probably not related to photosynthesis. In Barbarea verna (Land cress), this protein is Protein Ycf2.